We begin with the raw amino-acid sequence, 506 residues long: Histidine ammonia-lyase (506 aa).

Positions 143–145 (ASG) form a cross-link, 5-imidazolinone (Ala-Gly). Ser144 bears the 2,3-didehydroalanine (Ser) mark.

This sequence belongs to the PAL/histidase family. Contains an active site 4-methylidene-imidazol-5-one (MIO), which is formed autocatalytically by cyclization and dehydration of residues Ala-Ser-Gly.

It is found in the cytoplasm. It carries out the reaction L-histidine = trans-urocanate + NH4(+). It functions in the pathway amino-acid degradation; L-histidine degradation into L-glutamate; N-formimidoyl-L-glutamate from L-histidine: step 1/3. This is Histidine ammonia-lyase from Salmonella gallinarum (strain 287/91 / NCTC 13346).